Here is a 1183-residue protein sequence, read N- to C-terminus: DNA-directed RNA polymerase subunit beta (1183 aa).

Belongs to the RNA polymerase beta chain family. The RNAP catalytic core consists of 2 alpha, 1 beta, 1 beta' and 1 omega subunit. When a sigma factor is associated with the core the holoenzyme is formed, which can initiate transcription.

It catalyses the reaction RNA(n) + a ribonucleoside 5'-triphosphate = RNA(n+1) + diphosphate. Functionally, DNA-dependent RNA polymerase catalyzes the transcription of DNA into RNA using the four ribonucleoside triphosphates as substrates. This Staphylococcus aureus (strain COL) protein is DNA-directed RNA polymerase subunit beta.